Reading from the N-terminus, the 31-residue chain is Cytochrome b6-f complex subunit 6 (31 aa).

A helical transmembrane segment spans residues Ala-3–Phe-23.

Belongs to the PetL family. In terms of assembly, the 4 large subunits of the cytochrome b6-f complex are cytochrome b6, subunit IV (17 kDa polypeptide, PetD), cytochrome f and the Rieske protein, while the 4 small subunits are PetG, PetL, PetM and PetN. The complex functions as a dimer.

Its subcellular location is the cellular thylakoid membrane. Functionally, component of the cytochrome b6-f complex, which mediates electron transfer between photosystem II (PSII) and photosystem I (PSI), cyclic electron flow around PSI, and state transitions. PetL is important for photoautotrophic growth as well as for electron transfer efficiency and stability of the cytochrome b6-f complex. The protein is Cytochrome b6-f complex subunit 6 of Nostoc sp. (strain PCC 7120 / SAG 25.82 / UTEX 2576).